Reading from the N-terminus, the 115-residue chain is MWLLRPAGSNFIVALIVLACAGPLTCSAQLDAGILNPWGSAGHNDAVMPGMFANSESDERFYSPHCSSRGLPLVNESMASVIFFLSLAMVCVAIVAILYNCCFNSFKNSVINSRW.

The first 27 residues, 1–27, serve as a signal peptide directing secretion; it reads MWLLRPAGSNFIVALIVLACAGPLTCS. Over 28-77 the chain is Virion surface; it reads AQLDAGILNPWGSAGHNDAVMPGMFANSESDERFYSPHCSSRGLPLVNES. A helical membrane pass occupies residues 78-98; it reads MASVIFFLSLAMVCVAIVAIL. The Intravirion segment spans residues 99–115; sequence YNCCFNSFKNSVINSRW.

This sequence belongs to the herpesviridae glycoprotein N family. Interacts (via N-terminus) with gM (via N-terminus). The gM-gN heterodimer forms the gCII complex.

It is found in the virion membrane. Its subcellular location is the host membrane. The protein localises to the host Golgi apparatus. The protein resides in the host trans-Golgi network. Envelope glycoprotein necessary for proper maturation of gM and modulation of its membrane fusion activity. Also plays a critical role in virion morphogenesis. The protein is Envelope glycoprotein N of Psittacid herpesvirus 1 (isolate Amazon parrot/-/97-0001/1997) (PsHV-1).